Reading from the N-terminus, the 235-residue chain is Aspartate/glutamate leucyltransferase (235 aa).

The protein belongs to the R-transferase family. Bpt subfamily.

The protein resides in the cytoplasm. It catalyses the reaction N-terminal L-glutamyl-[protein] + L-leucyl-tRNA(Leu) = N-terminal L-leucyl-L-glutamyl-[protein] + tRNA(Leu) + H(+). The catalysed reaction is N-terminal L-aspartyl-[protein] + L-leucyl-tRNA(Leu) = N-terminal L-leucyl-L-aspartyl-[protein] + tRNA(Leu) + H(+). Functions in the N-end rule pathway of protein degradation where it conjugates Leu from its aminoacyl-tRNA to the N-termini of proteins containing an N-terminal aspartate or glutamate. In Stutzerimonas stutzeri (strain A1501) (Pseudomonas stutzeri), this protein is Aspartate/glutamate leucyltransferase.